The primary structure comprises 708 residues: Leucine-rich repeat neuronal protein 3 (708 aa).

The N-terminal stretch at methionine 1 to alanine 22 is a signal peptide. Positions valine 23–alanine 69 constitute an LRRNT domain. The Extracellular portion of the chain corresponds to valine 23–threonine 628. LRR repeat units follow at residues asparagine 70–proline 91, asparagine 93–lysine 114, glutamine 117–glutamate 138, asparagine 141–glycine 162, asparagine 165–alanine 186, asparagine 189–proline 210, asparagine 213–glycine 234, asparagine 237–lysine 258, asparagine 261–asparagine 282, histidine 285–alanine 304, aspartate 310–arginine 332, and lysine 335–proline 358. N-linked (GlcNAc...) asparagine glycosylation is found at asparagine 93 and asparagine 103. Asparagine 223 carries N-linked (GlcNAc...) asparagine glycosylation. One can recognise an LRRCT domain in the interval asparagine 368–proline 421. Asparagine 382 carries an N-linked (GlcNAc...) asparagine glycan. Residues proline 421–aspartate 514 enclose the Ig-like C2-type domain. Cysteine 444 and cysteine 496 form a disulfide bridge. N-linked (GlcNAc...) asparagine glycosylation is found at asparagine 522, asparagine 579, asparagine 608, and asparagine 625. A Fibronectin type-III domain is found at glycine 523 to aspartate 617. The chain crosses the membrane as a helical span at residues leucine 629–leucine 649. Residues serine 650–serine 708 lie on the Cytoplasmic side of the membrane.

Its subcellular location is the membrane. The sequence is that of Leucine-rich repeat neuronal protein 3 (LRRN3) from Pongo abelii (Sumatran orangutan).